A 384-amino-acid polypeptide reads, in one-letter code: Dihydrolipoyllysine-residue acetyltransferase component of pyruvate dehydrogenase complex (384 aa).

One can recognise a Lipoyl-binding domain in the interval 2-77 (ANEFKFTDVG…SIGQVMAVIG (76 aa)). N6-lipoyllysine is present on K43. The active site involves H356.

This sequence belongs to the 2-oxoacid dehydrogenase family. Forms a 24-polypeptide structural core with octahedral symmetry. (R)-lipoate serves as cofactor.

It carries out the reaction N(6)-[(R)-dihydrolipoyl]-L-lysyl-[protein] + acetyl-CoA = N(6)-[(R)-S(8)-acetyldihydrolipoyl]-L-lysyl-[protein] + CoA. Its function is as follows. The pyruvate dehydrogenase complex catalyzes the overall conversion of pyruvate to acetyl-CoA and CO(2). It contains multiple copies of three enzymatic components: pyruvate dehydrogenase (E1), dihydrolipoamide acetyltransferase (E2) and lipoamide dehydrogenase (E3). The chain is Dihydrolipoyllysine-residue acetyltransferase component of pyruvate dehydrogenase complex (pdhC) from Mycoplasma genitalium (strain ATCC 33530 / DSM 19775 / NCTC 10195 / G37) (Mycoplasmoides genitalium).